The chain runs to 180 residues: MSRIGRKPVPIPQNVQVEIKDGNCVSVKGPLGQIEKTFSPLLTIKKVDNQIVVERPNDEKFVKALHGLTRALINNMVLGVTQGFEKRLELQGTGYRARVQGNKLVLEVGFSHPVELEIPTGLTVSVQDNTKISVKGIDKELVGQFAAIVRSVRPAEPYKGKGIRYEGEKIRQKAGKAGKK.

Belongs to the universal ribosomal protein uL6 family. As to quaternary structure, part of the 50S ribosomal subunit.

This protein binds to the 23S rRNA, and is important in its secondary structure. It is located near the subunit interface in the base of the L7/L12 stalk, and near the tRNA binding site of the peptidyltransferase center. This Dictyoglomus turgidum (strain DSM 6724 / Z-1310) protein is Large ribosomal subunit protein uL6.